We begin with the raw amino-acid sequence, 29 residues long: Cyclotide mobo-B (29 aa).

The segment at residues 1 to 29 is a cross-link (cyclopeptide (Gly-Asn)); that stretch reads GKPICGETCAKGKCYTPKCTCNWPICYKN. Cystine bridges form between Cys5–Cys19, Cys9–Cys21, and Cys14–Cys26.

Belongs to the cyclotide family. In terms of processing, this is a cyclic peptide.

Its function is as follows. Probably participates in a plant defense mechanism. The sequence is that of Cyclotide mobo-B from Melicytus obovatus (Hymenanthera obovata).